Reading from the N-terminus, the 264-residue chain is Thymidylate synthase (264 aa).

Arg-21 is a dUMP binding site. Residue His-51 coordinates (6R)-5,10-methylene-5,6,7,8-tetrahydrofolate. 126–127 (RR) contacts dUMP. The Nucleophile role is filled by Cys-146. DUMP contacts are provided by residues 166-169 (RSAD), Asn-177, and 207-209 (HLY). Residue Asp-169 coordinates (6R)-5,10-methylene-5,6,7,8-tetrahydrofolate. Ala-263 is a binding site for (6R)-5,10-methylene-5,6,7,8-tetrahydrofolate.

Belongs to the thymidylate synthase family. Bacterial-type ThyA subfamily. In terms of assembly, homodimer.

Its subcellular location is the cytoplasm. It catalyses the reaction dUMP + (6R)-5,10-methylene-5,6,7,8-tetrahydrofolate = 7,8-dihydrofolate + dTMP. Its pathway is pyrimidine metabolism; dTTP biosynthesis. Functionally, catalyzes the reductive methylation of 2'-deoxyuridine-5'-monophosphate (dUMP) to 2'-deoxythymidine-5'-monophosphate (dTMP) while utilizing 5,10-methylenetetrahydrofolate (mTHF) as the methyl donor and reductant in the reaction, yielding dihydrofolate (DHF) as a by-product. This enzymatic reaction provides an intracellular de novo source of dTMP, an essential precursor for DNA biosynthesis. This chain is Thymidylate synthase, found in Rhizobium johnstonii (strain DSM 114642 / LMG 32736 / 3841) (Rhizobium leguminosarum bv. viciae).